The sequence spans 989 residues: Phosphoenolpyruvate carboxylase (989 aa).

Residues His175 and Lys630 contribute to the active site.

Belongs to the PEPCase type 1 family. Requires Mg(2+) as cofactor.

The catalysed reaction is oxaloacetate + phosphate = phosphoenolpyruvate + hydrogencarbonate. Its function is as follows. Forms oxaloacetate, a four-carbon dicarboxylic acid source for the tricarboxylic acid cycle. The sequence is that of Phosphoenolpyruvate carboxylase from Prochlorococcus marinus (strain MIT 9515).